A 230-amino-acid polypeptide reads, in one-letter code: DNA mismatch repair protein MutH (230 aa).

This sequence belongs to the MutH family.

It is found in the cytoplasm. Its function is as follows. Sequence-specific endonuclease that cleaves unmethylated GATC sequences. It is involved in DNA mismatch repair. This Enterobacter sp. (strain 638) protein is DNA mismatch repair protein MutH.